Consider the following 299-residue polypeptide: F-actin-capping protein subunit alpha-3 (299 aa).

Ser-290 carries the post-translational modification Phosphoserine.

The protein belongs to the F-actin-capping protein alpha subunit family. As to quaternary structure, component of the F-actin capping complex, composed of a heterodimer of an alpha and a beta subunit. Component of the WASH complex, composed of F-actin-capping protein subunit alpha (CAPZA1, CAPZA2 or CAPZA3), F-actin-capping protein subunit beta (CAPZB), WASH (WASHC1, WASH2P, WASH3P, WASH4P, WASH5P or WASH6P), WASHC2 (WASHC2A or WASHC2C), WASHC3, WASHC4 and WASHC5. As to expression, expressed exclusively in testis and sperm. Highest expression is found in the neck region of ejaculated sperm with lower levels found in the tail and postacrosome region.

Its subcellular location is the cytoplasm. The protein localises to the cytoskeleton. Its function is as follows. F-actin-capping proteins bind in a Ca(2+)-independent manner to the fast growing ends of actin filaments (barbed end) thereby blocking the exchange of subunits at these ends. Unlike other capping proteins (such as gelsolin and severin), these proteins do not sever actin filaments. May play a role in the morphogenesis of spermatid. The chain is F-actin-capping protein subunit alpha-3 (CAPZA3) from Homo sapiens (Human).